The chain runs to 396 residues: 1-deoxy-D-xylulose 5-phosphate reductoisomerase (396 aa).

NADPH-binding residues include T15, G16, S17, I18, G41, and N129. Residue K130 participates in 1-deoxy-D-xylulose 5-phosphate binding. E131 provides a ligand contact to NADPH. A Mn(2+)-binding site is contributed by D155. 1-deoxy-D-xylulose 5-phosphate-binding residues include S156, E157, S182, and H205. E157 is a binding site for Mn(2+). An NADPH-binding site is contributed by G211. 1-deoxy-D-xylulose 5-phosphate is bound by residues S218, N223, K224, and E227. E227 serves as a coordination point for Mn(2+).

It belongs to the DXR family. It depends on Mg(2+) as a cofactor. Mn(2+) is required as a cofactor.

The enzyme catalyses 2-C-methyl-D-erythritol 4-phosphate + NADP(+) = 1-deoxy-D-xylulose 5-phosphate + NADPH + H(+). Its pathway is isoprenoid biosynthesis; isopentenyl diphosphate biosynthesis via DXP pathway; isopentenyl diphosphate from 1-deoxy-D-xylulose 5-phosphate: step 1/6. Functionally, catalyzes the NADPH-dependent rearrangement and reduction of 1-deoxy-D-xylulose-5-phosphate (DXP) to 2-C-methyl-D-erythritol 4-phosphate (MEP). This chain is 1-deoxy-D-xylulose 5-phosphate reductoisomerase, found in Xanthomonas axonopodis pv. citri (strain 306).